A 374-amino-acid polypeptide reads, in one-letter code: Protein A6 homolog (374 aa).

It belongs to the chordopoxvirinae A6 family.

It is found in the virion. Its function is as follows. Plays an essential role in immature virion (IV) to mature virion (MV) transition. This Vertebrata (FPV) protein is Protein A6 homolog.